The sequence spans 130 residues: Small ribosomal subunit protein uS8 (130 aa).

The protein belongs to the universal ribosomal protein uS8 family. As to quaternary structure, part of the 30S ribosomal subunit. Contacts proteins S5 and S12.

Its function is as follows. One of the primary rRNA binding proteins, it binds directly to 16S rRNA central domain where it helps coordinate assembly of the platform of the 30S subunit. In Marinomonas sp. (strain MWYL1), this protein is Small ribosomal subunit protein uS8.